The primary structure comprises 533 residues: Na(+)/H(+) antiporter NhaB (533 aa).

10 helical membrane-spanning segments follow: residues 28–50 (FLII…VLVL), 67–87 (PGGL…SQVL), 96–116 (VLLL…LLLF), 131–165 (VSLM…FYSI), 254–274 (VPVL…GIFG), 316–336 (LIAG…SVII), 364–384 (LAVF…APVI), 396–416 (LVIF…VFVG), 454–474 (ATPN…APLI), and 481–501 (MVWM…MAIQ).

The protein belongs to the NhaB Na(+)/H(+) (TC 2.A.34) antiporter family.

Its subcellular location is the cell inner membrane. The enzyme catalyses 2 Na(+)(in) + 3 H(+)(out) = 2 Na(+)(out) + 3 H(+)(in). In terms of biological role, na(+)/H(+) antiporter that extrudes sodium in exchange for external protons. The sequence is that of Na(+)/H(+) antiporter NhaB from Shewanella baltica (strain OS195).